A 109-amino-acid polypeptide reads, in one-letter code: Putative small proline-rich protein 2J (109 aa).

A run of 5 repeats spans residues 21-29 (RSAQSPVLC), 30-38 (QSAPSLVLL), 39-47 (QSAQSPIHC), 48-56 (QSALSHAHL), and 57-65 (SHASRNALL). Residues 21 to 65 (RSAQSPVLCQSAPSLVLLQSAQSPIHCQSALSHAHLSHASRNALL) form a 5 X 9 AA approximate tandem repeats region. The tract at residues 76–109 (AHPRANKGFSSLQNQKKRTESILHKSIATPPSSI) is disordered.

Belongs to the cornifin (SPRR) family. As to expression, not expressed in uterus.

The protein localises to the cytoplasm. Cross-linked envelope protein of keratinocytes. It is a keratinocyte protein that first appears in the cell cytosol, but ultimately becomes cross-linked to membrane proteins by transglutaminase. All that results in the formation of an insoluble envelope beneath the plasma membrane. The chain is Putative small proline-rich protein 2J (Sprr2j) from Mus musculus (Mouse).